The primary structure comprises 504 residues: Amyloid-beta A4 precursor protein-binding family B member 3 (504 aa).

The region spanning 29-61 (TGLPPGWRKIRDAAGTYYWHVPSGSTQWQRPTW) is the WW domain. 2 PID domains span residues 111–278 (EPGA…QVEL) and 283–438 (SQAA…RTSS).

As to quaternary structure, interacts with APP (via intracellular domain). Interacts with APLP1 and APLP2 (via intracellular domain). As to expression, expressed predominantly in brain and testis.

Its subcellular location is the cytoplasm. It localises to the nucleus. Functionally, may modulate the internalization of amyloid-beta precursor protein. The polypeptide is Amyloid-beta A4 precursor protein-binding family B member 3 (Rattus norvegicus (Rat)).